The primary structure comprises 220 residues: Deoxyribose-phosphate aldolase 1 (220 aa).

Aspartate 89 acts as the Proton donor/acceptor in catalysis. Catalysis depends on lysine 151, which acts as the Schiff-base intermediate with acetaldehyde. Lysine 180 functions as the Proton donor/acceptor in the catalytic mechanism.

Belongs to the DeoC/FbaB aldolase family. DeoC type 1 subfamily.

The protein resides in the cytoplasm. It catalyses the reaction 2-deoxy-D-ribose 5-phosphate = D-glyceraldehyde 3-phosphate + acetaldehyde. It functions in the pathway carbohydrate degradation; 2-deoxy-D-ribose 1-phosphate degradation; D-glyceraldehyde 3-phosphate and acetaldehyde from 2-deoxy-alpha-D-ribose 1-phosphate: step 2/2. Catalyzes a reversible aldol reaction between acetaldehyde and D-glyceraldehyde 3-phosphate to generate 2-deoxy-D-ribose 5-phosphate. The sequence is that of Deoxyribose-phosphate aldolase 1 from Staphylococcus aureus (strain MRSA252).